The chain runs to 188 residues: Probable nicotinate-nucleotide adenylyltransferase (188 aa).

Belongs to the NadD family.

It carries out the reaction nicotinate beta-D-ribonucleotide + ATP + H(+) = deamido-NAD(+) + diphosphate. It participates in cofactor biosynthesis; NAD(+) biosynthesis; deamido-NAD(+) from nicotinate D-ribonucleotide: step 1/1. In terms of biological role, catalyzes the reversible adenylation of nicotinate mononucleotide (NaMN) to nicotinic acid adenine dinucleotide (NaAD). The chain is Probable nicotinate-nucleotide adenylyltransferase from Rhizobium meliloti (strain 1021) (Ensifer meliloti).